Here is a 112-residue protein sequence, read N- to C-terminus: NADH-quinone oxidoreductase subunit K (112 aa).

3 helical membrane-spanning segments follow: residues L14 to I34, V39 to F59, and L76 to F96.

The protein belongs to the complex I subunit 4L family. As to quaternary structure, NDH-1 is composed of 14 different subunits. Subunits NuoA, H, J, K, L, M, N constitute the membrane sector of the complex.

It localises to the cell membrane. The catalysed reaction is a quinone + NADH + 5 H(+)(in) = a quinol + NAD(+) + 4 H(+)(out). Its function is as follows. NDH-1 shuttles electrons from NADH, via FMN and iron-sulfur (Fe-S) centers, to quinones in the respiratory chain. The immediate electron acceptor for the enzyme in this species is believed to be a menaquinone. Couples the redox reaction to proton translocation (for every two electrons transferred, four hydrogen ions are translocated across the cytoplasmic membrane), and thus conserves the redox energy in a proton gradient. This chain is NADH-quinone oxidoreductase subunit K, found in Rubrobacter xylanophilus (strain DSM 9941 / JCM 11954 / NBRC 16129 / PRD-1).